The primary structure comprises 498 residues: ATP synthase subunit beta, chloroplastic (498 aa).

Position 172 to 179 (172 to 179) interacts with ATP; the sequence is GGAGVGKT.

Belongs to the ATPase alpha/beta chains family. F-type ATPases have 2 components, CF(1) - the catalytic core - and CF(0) - the membrane proton channel. CF(1) has five subunits: alpha(3), beta(3), gamma(1), delta(1), epsilon(1). CF(0) has four main subunits: a(1), b(1), b'(1) and c(9-12).

The protein resides in the plastid. The protein localises to the chloroplast thylakoid membrane. The enzyme catalyses ATP + H2O + 4 H(+)(in) = ADP + phosphate + 5 H(+)(out). Its function is as follows. Produces ATP from ADP in the presence of a proton gradient across the membrane. The catalytic sites are hosted primarily by the beta subunits. The protein is ATP synthase subunit beta, chloroplastic of Phoenix dactylifera (Date palm).